We begin with the raw amino-acid sequence, 129 residues long: Follitropin subunit beta (129 aa).

An N-terminal signal peptide occupies residues 1–20 (MKTVQFCFLFCCWKAICCNS). 6 disulfide bridges follow: C21-C69, C35-C84, C38-C122, C46-C100, C50-C102, and C105-C112. Residues N25 and N42 are each glycosylated (N-linked (GlcNAc...) asparagine).

The protein belongs to the glycoprotein hormones subunit beta family. In terms of assembly, heterodimer. The active follitropin is a heterodimer composed of an alpha chain/CGA shared with other hormones and a unique beta chain/FSHB shown here.

It is found in the secreted. Together with the alpha chain CGA constitutes follitropin, the follicle-stimulating hormone, and provides its biological specificity to the hormone heterodimer. Binds FSHR, a G protein-coupled receptor, on target cells to activate downstream signaling pathways. Follitropin is involved in follicle development and spermatogenesis in reproductive organs. The polypeptide is Follitropin subunit beta (FSHB) (Saimiri boliviensis boliviensis (Bolivian squirrel monkey)).